A 197-amino-acid polypeptide reads, in one-letter code: dITP/XTP pyrophosphatase (197 aa).

Residue 8–13 (TGNPGK) participates in substrate binding. Mg(2+)-binding residues include Glu-40 and Asp-69. The active-site Proton acceptor is the Asp-69. Residues Ser-70, 154 to 157 (FGYD), Lys-177, and 182 to 183 (HR) each bind substrate.

This sequence belongs to the HAM1 NTPase family. In terms of assembly, homodimer. It depends on Mg(2+) as a cofactor.

The enzyme catalyses XTP + H2O = XMP + diphosphate + H(+). The catalysed reaction is dITP + H2O = dIMP + diphosphate + H(+). It catalyses the reaction ITP + H2O = IMP + diphosphate + H(+). Pyrophosphatase that catalyzes the hydrolysis of nucleoside triphosphates to their monophosphate derivatives, with a high preference for the non-canonical purine nucleotides XTP (xanthosine triphosphate), dITP (deoxyinosine triphosphate) and ITP. Seems to function as a house-cleaning enzyme that removes non-canonical purine nucleotides from the nucleotide pool, thus preventing their incorporation into DNA/RNA and avoiding chromosomal lesions. The protein is dITP/XTP pyrophosphatase of Yersinia pseudotuberculosis serotype I (strain IP32953).